The following is a 1759-amino-acid chain: Replicase polyprotein (1759 aa).

In terms of domain architecture, DRBM spans 23–90 (DKISTLKMVA…ARQMLLLLSG (68 aa)). Positions 113–140 (YTRLEKAIERRDDKIKTLIKELRRQIKN) form a coiled coil. One can recognise an SF3 helicase domain in the interval 421–595 (AKQLYEYVSC…KEYGIETEKG (175 aa)). 449–456 (GESGVGKT) is a binding site for ATP. The region spanning 950–1191 (DAAHNLMIDV…YACPLTQECL (242 aa)) is the Peptidase C3 domain. Active-site for picornain 3C-like protease activity residues include histidine 994, aspartate 1054, and cysteine 1152. The 140-residue stretch at 1483-1622 (SHVIAGDFGN…NIDAKVVEWF (140 aa)) folds into the RdRp catalytic domain.

In terms of processing, protein 1A might be expressed through a ribosomal skip from one codon to the next without formation of a peptide bond.

It catalyses the reaction RNA(n) + a ribonucleoside 5'-triphosphate = RNA(n+1) + diphosphate. Its function is as follows. Protein 1A functions as a suppressor of RNA-mediated gene silencing, an antiviral defense mechanism of insect cells. Binds to long dsRNA and to a lesser extent, to siRNA. Functionally, RNA-directed RNA polymerase replicates genomic and antigenomic RNA. The protein is Replicase polyprotein of Drosophila C virus (strain EB) (DCV).